The sequence spans 206 residues: Large ribosomal subunit protein uL3 (206 aa).

The tract at residues 127–151 (SGGPSSHGSKFHRHLGGTGQATTPA) is disordered.

Belongs to the universal ribosomal protein uL3 family. In terms of assembly, part of the 50S ribosomal subunit. Forms a cluster with proteins L14 and L19.

Functionally, one of the primary rRNA binding proteins, it binds directly near the 3'-end of the 23S rRNA, where it nucleates assembly of the 50S subunit. This chain is Large ribosomal subunit protein uL3, found in Borreliella afzelii (strain PKo) (Borrelia afzelii).